Reading from the N-terminus, the 334-residue chain is Beta-hexosaminidase (334 aa).

Substrate contacts are provided by residues aspartate 60, arginine 68, arginine 133, and 163-164; that span reads KH. Histidine 176 functions as the Proton donor/acceptor in the catalytic mechanism. Aspartate 247 serves as the catalytic Nucleophile.

It belongs to the glycosyl hydrolase 3 family. NagZ subfamily.

The protein resides in the cytoplasm. The enzyme catalyses Hydrolysis of terminal non-reducing N-acetyl-D-hexosamine residues in N-acetyl-beta-D-hexosaminides.. Its pathway is cell wall biogenesis; peptidoglycan recycling. Plays a role in peptidoglycan recycling by cleaving the terminal beta-1,4-linked N-acetylglucosamine (GlcNAc) from peptide-linked peptidoglycan fragments, giving rise to free GlcNAc, anhydro-N-acetylmuramic acid and anhydro-N-acetylmuramic acid-linked peptides. This is Beta-hexosaminidase from Xanthomonas oryzae pv. oryzae (strain MAFF 311018).